The sequence spans 748 residues: Polyribonucleotide nucleotidyltransferase (748 aa).

Mg(2+)-binding residues include aspartate 487 and aspartate 493. The KH domain occupies 554-613 (PSTTTIKIDKDKIRDIIGPGGKVIKEICETSGAKIDISDDGTVSVYASDRDKLKVALDKI). In terms of domain architecture, S1 motif spans 623–691 (GEIFNGTVVK…NKGKAKLTIK (69 aa)). The segment at 691-748 (KNADKDKSSNNTKPKTNVNNTKDNSEPEQRRDSSKKRAWNEDNNAETAEVITERKYFN) is disordered. Residues 699–712 (SNNTKPKTNVNNTK) are compositionally biased toward low complexity. Over residues 713–722 (DNSEPEQRRD) the composition is skewed to basic and acidic residues.

Belongs to the polyribonucleotide nucleotidyltransferase family. It depends on Mg(2+) as a cofactor.

It localises to the cytoplasm. It carries out the reaction RNA(n+1) + phosphate = RNA(n) + a ribonucleoside 5'-diphosphate. In terms of biological role, involved in mRNA degradation. Catalyzes the phosphorolysis of single-stranded polyribonucleotides processively in the 3'- to 5'-direction. This is Polyribonucleotide nucleotidyltransferase from Rickettsia africae (strain ESF-5).